Consider the following 189-residue polypeptide: UPF0301 protein PSEEN5058 (189 aa).

The protein belongs to the UPF0301 (AlgH) family.

The chain is UPF0301 protein PSEEN5058 from Pseudomonas entomophila (strain L48).